The chain runs to 338 residues: Lipoate-protein ligase A (338 aa).

Residues 29 to 216 (PATQRVLFLW…AFFSHYGERV (188 aa)) enclose the BPL/LPL catalytic domain. ATP contacts are provided by residues Arg71, 76–79 (GAVF), and Lys134. Lys134 provides a ligand contact to (R)-lipoate.

Belongs to the LplA family. Monomer.

It localises to the cytoplasm. The catalysed reaction is L-lysyl-[lipoyl-carrier protein] + (R)-lipoate + ATP = N(6)-[(R)-lipoyl]-L-lysyl-[lipoyl-carrier protein] + AMP + diphosphate + H(+). It participates in protein modification; protein lipoylation via exogenous pathway; protein N(6)-(lipoyl)lysine from lipoate: step 1/2. The protein operates within protein modification; protein lipoylation via exogenous pathway; protein N(6)-(lipoyl)lysine from lipoate: step 2/2. Its function is as follows. Catalyzes both the ATP-dependent activation of exogenously supplied lipoate to lipoyl-AMP and the transfer of the activated lipoyl onto the lipoyl domains of lipoate-dependent enzymes. The sequence is that of Lipoate-protein ligase A from Klebsiella pneumoniae (strain 342).